The primary structure comprises 301 residues: Glutamyl-Q tRNA(Asp) synthetase (301 aa).

L-glutamate-binding positions include Arg-9–Ser-13 and Glu-45. The short motif at Pro-12–Ser-22 is the 'HIGH' region element. Zn(2+) is bound by residues Cys-101, Cys-103, Tyr-121, and Cys-125. The L-glutamate site is built by Tyr-179 and Arg-197. The 'KMSKS' region motif lies at Lys-235–Gln-239. Lys-238 provides a ligand contact to ATP.

This sequence belongs to the class-I aminoacyl-tRNA synthetase family. GluQ subfamily. The cofactor is Zn(2+).

Functionally, catalyzes the tRNA-independent activation of glutamate in presence of ATP and the subsequent transfer of glutamate onto a tRNA(Asp). Glutamate is transferred on the 2-amino-5-(4,5-dihydroxy-2-cyclopenten-1-yl) moiety of the queuosine in the wobble position of the QUC anticodon. The protein is Glutamyl-Q tRNA(Asp) synthetase of Thiobacillus denitrificans (strain ATCC 25259 / T1).